The chain runs to 144 residues: MAKRGGKRTVGVPYRFHVTPGIFMNSLVPVADNSGAKLVRVIGVVGHYSKTVHRRIPGAGVGDMVVVVVREGKPELRKQIFRAIVVRQRRPYRRPDGTWVAFEDNAVVIVTPEGDPKGSEIHGPVAMEATLRWPTIANLASIVV.

Belongs to the universal ribosomal protein uL14 family. As to quaternary structure, part of the 50S ribosomal subunit. Forms a cluster with proteins L3 and L24e, part of which may contact the 16S rRNA in 2 intersubunit bridges.

In terms of biological role, binds to 23S rRNA. Forms part of two intersubunit bridges in the 70S ribosome. This is Large ribosomal subunit protein uL14 from Pyrobaculum aerophilum (strain ATCC 51768 / DSM 7523 / JCM 9630 / CIP 104966 / NBRC 100827 / IM2).